The following is a 570-amino-acid chain: NADPH oxidase 2 (570 aa).

Over 2–9 the chain is Cytoplasmic; it reads GNWVVNEG. The chain crosses the membrane as a helical span at residues 10 to 36; that stretch reads ISIFVILVWLGMNVFLFVWYYRVYDIP. The Extracellular portion of the chain corresponds to 37–46; sequence DKFFYTRKLL. A helical membrane pass occupies residues 47-72; the sequence is GSALALARAPAACLNFNCMLILLPVC. The region spanning 54 to 286 is the Ferric oxidoreductase domain; that stretch reads RAPAACLNFN…MFLYLCERLV (233 aa). At 73 to 95 the chain is on the cytoplasmic side; sequence RNLLSFLRGSSACCSTRIRRQLD. The chain crosses the membrane as a helical span at residues 96 to 130; the sequence is RNLTFHKMVAWMIALHTAIHTIAHLFNVEWCVNAR. Heme b contacts are provided by H101 and H115. At 131-163 the chain is on the extracellular side; that stretch reads VNNSDPYSIALSDIGDKPNETYLNFVRQRIKNP. 2 N-linked (GlcNAc...) asparagine glycosylation sites follow: N132 and N149. K161 is covalently cross-linked (Glycyl lysine isopeptide (Lys-Gly) (interchain with G-Cter in ubiquitin)). A helical transmembrane segment spans residues 164 to 194; the sequence is EGGLYVAVTRLAGITGVVITLCLILIITSST. Residues 195-203 lie on the Cytoplasmic side of the membrane; the sequence is KTIRRSYFE. The FAD site is built by R199 and S200. Residues 204–222 traverse the membrane as a helical segment; it reads VFWYTHHLFVIFFIGLAIH. Heme b-binding residues include W206, H209, H222, R226, and I227. Residues 223–267 are Extracellular-facing; that stretch reads GAQRIVRGQTAESLLKHQPRNCYQNISQWGKIENCPIPEFSGNPP. The N-linked (GlcNAc...) asparagine glycan is linked to N247. Residues M268, Y280, and R287 each contribute to the heme b site. Residues 268–285 traverse the membrane as a helical segment; sequence MTWKWIVGPMFLYLCERL. The Cytoplasmic portion of the chain corresponds to 286-570; it reads VRFWRSQQKV…VHFIFNKENF (285 aa). The FAD-binding FR-type domain maps to 287 to 397; that stretch reads RFWRSQQKVV…DGPFGTASED (111 aa). Residues K294, K299, K306, K328, and K334 each participate in a glycyl lysine isopeptide (Lys-Gly) (interchain with G-Cter in ubiquitin) cross-link. FAD contacts are provided by W337, H338, P339, T341, H354, R356, W361, and T362. A Glycyl lysine isopeptide (Lys-Gly) (interchain with G-Cter in ubiquitin) cross-link involves residue K381. Residues I411, R446, and T481 each coordinate NADPH. Residue K506 forms a Glycyl lysine isopeptide (Lys-Gly) (interchain with G-Cter in ubiquitin) linkage. R513 serves as a coordination point for NADPH. A Glycyl lysine isopeptide (Lys-Gly) (interchain with G-Cter in ubiquitin) cross-link involves residue K567.

In terms of assembly, component of the phagocyte NADPH oxidase core complex/cytochrome b558 complex, composed of CYBB (heavy chain (beta)) and CYBA (light chain (alpha)). Component of the phagocyte NADPH oxidase complex composed of an obligatory core heterodimer formed by the membrane proteins CYBA and CYBB and the cytosolic regulatory subunits NCF1/p47-phox, NCF2/p67-phox, NCF4/p40-phox and the small GTPase RAC1 or RAC2. Interacts with NCF1 (phosphorylated form). Interacts with NCF2; the interaction is enhanced in the presence of GBP7. Interacts with RAC2. Interacts with RAC1. Interacts with calprotectin (S100A8/9). Interacts with NRROS; the interaction is direct and impairs formation of a stable NADPH oxidase complex. Interacts with CYBC1; CYBC1 may act as a chaperone stabilizing Cytochrome b-245 heterodimer. The CYBA-CYBB complex interacts with GBP7. Requires FAD as cofactor. Glycosylated. Post-translationally, phosphorylated on Ser and Thr residues by PKC during neutrophils activation. Phosphorylation enhances the NADPH oxidase activity and stimulates its interaction with RAC2, NCF2/p67-phox, and NCF1/p47-phox. In terms of processing, undergoes 'Lys-48'-linked polyubiquitination, likely by RNF145, triggering endoplasmic reticulum-associated degradation.

Its subcellular location is the cell membrane. It catalyses the reaction NADPH + 2 O2 = 2 superoxide + NADP(+) + H(+). Catalytic subunit of the phagocyte NADPH oxidase complex that mediates the transfer of electrons from cytosolic NADPH to O2 to produce the superoxide anion (O2(-)). In the activated complex, electrons are first transferred from NADPH to flavin adenine dinucleotide (FAD) and subsequently transferred via two heme molecules to molecular oxygen, producing superoxide through an outer-sphere reaction. Activation of the NADPH oxidase complex is initiated by the assembly of cytosolic subunits of the NADPH oxidase complex with the core NADPH oxidase complex to form a complex at the plasma membrane or phagosomal membrane. This activation process is initiated by phosphorylation dependent binding of the cytosolic NCF1/p47-phox subunit to the C-terminus of CYBA/p22-phox. NADPH oxidase complex assembly is impaired through interaction with NRROS. This chain is NADPH oxidase 2, found in Bos taurus (Bovine).